The chain runs to 505 residues: Maturase K (505 aa).

The protein belongs to the intron maturase 2 family. MatK subfamily.

It localises to the plastid. The protein resides in the chloroplast. In terms of biological role, usually encoded in the trnK tRNA gene intron. Probably assists in splicing its own and other chloroplast group II introns. This is Maturase K from Beta vulgaris (Sugar beet).